We begin with the raw amino-acid sequence, 328 residues long: Cysteine proteinase COT44 (328 aa).

Residues 1-99 (MSIYLRWSLE…KYSAAVNVDE (99 aa)) constitute a propeptide, activation peptide. N-linked (GlcNAc...) asparagine glycans are attached at residues Asn-48 and Asn-60. Cystine bridges form between Cys-121-Cys-163, Cys-155-Cys-196, and Cys-254-Cys-305. The active site involves Cys-124. Catalysis depends on residues His-260 and Asn-280.

Belongs to the peptidase C1 family. Present in both cotyledons and axes.

Functionally, may function in an early event in cortical cell differentiation. In Brassica napus (Rape), this protein is Cysteine proteinase COT44.